The following is an 81-amino-acid chain: Sec-independent protein translocase protein TatA (81 aa).

A helical membrane pass occupies residues 1 to 21 (MGSLSLWHWIIVGAVLLLLFG). A disordered region spans residues 41–81 (KKGLSEDDEKPEAARPAEPARSLDHQPVAEQPKVSETHRIG).

It belongs to the TatA/E family. In terms of assembly, the Tat system comprises two distinct complexes: a TatABC complex, containing multiple copies of TatA, TatB and TatC subunits, and a separate TatA complex, containing only TatA subunits. Substrates initially bind to the TatABC complex, which probably triggers association of the separate TatA complex to form the active translocon.

Its subcellular location is the cell inner membrane. In terms of biological role, part of the twin-arginine translocation (Tat) system that transports large folded proteins containing a characteristic twin-arginine motif in their signal peptide across membranes. TatA could form the protein-conducting channel of the Tat system. This is Sec-independent protein translocase protein TatA from Beijerinckia indica subsp. indica (strain ATCC 9039 / DSM 1715 / NCIMB 8712).